The chain runs to 474 residues: uncharacterized protein (474 aa).

An N-terminal signal peptide occupies residues 1–23 (MLRRYLTLSFSSLLLLALLFLTG). The N-palmitoyl cysteine moiety is linked to residue C24. C24 carries S-diacylglycerol cysteine lipidation.

The protein belongs to the MG067/MG068/MG395 family.

Its subcellular location is the cell membrane. This is an uncharacterized protein from Mycoplasma genitalium (strain ATCC 33530 / DSM 19775 / NCTC 10195 / G37) (Mycoplasmoides genitalium).